Here is a 291-residue protein sequence, read N- to C-terminus: Protease HtpX homolog (291 aa).

2 helical membrane-spanning segments follow: residues Ile-4 to Leu-24 and Ser-39 to Ile-59. His-144 provides a ligand contact to Zn(2+). Glu-145 is an active-site residue. Residue His-148 coordinates Zn(2+). The next 2 membrane-spanning stretches (helical) occupy residues Leu-159–Val-179 and Val-199–Phe-219. Residue Glu-224 participates in Zn(2+) binding.

This sequence belongs to the peptidase M48B family. The cofactor is Zn(2+).

It is found in the cell inner membrane. This chain is Protease HtpX homolog, found in Polaromonas naphthalenivorans (strain CJ2).